The chain runs to 251 residues: SNAP25 homologous protein SNAP29 (251 aa).

The disordered stretch occupies residues 1-52 (MAPKNSSWNPFDDEKEAAKSFSLNPFDDDDDDKEVEKRFTSSLKPSGGKENQ). A compositionally biased stretch (polar residues) spans 40-52 (TSSLKPSGGKENQ). The t-SNARE coiled-coil homology domain maps to 186–248 (KTQIAKQDEA…KQSNQRARYL (63 aa)).

Belongs to the SNAP-25 family.

It is found in the membrane. The protein resides in the cytoplasm. Functionally, SNAREs, soluble N-ethylmaleimide-sensitive factor-attachment protein receptors, are essential proteins for fusion of cellular membranes. SNAREs localized on opposing membranes assemble to form a trans-SNARE complex, an extended, parallel four alpha-helical bundle that drives membrane fusion. The polypeptide is SNAP25 homologous protein SNAP29 (SNAP29) (Arabidopsis thaliana (Mouse-ear cress)).